The chain runs to 544 residues: MESQRTFLFIGLMLVSFLLFQEWNTDYNTPKADPSATTQTLNPTSSESEDYVPTSSDSALPASATLAKRSVIEITTDVFKVKIDTRGGDIVETYLLQYEETKGSETPYMLLGEFDGKQYFSQSGLIGLNGPDASAQGRPTYHVEQKSYTLTGDELRVPLQFTDSNGVNFTKTYVFKKGQYDVALEYTINNTTSTPLQVQLYTQVKRTVQDKGSMVDQNYLGAAYGTDDDPYEKYSFSDMADKNLNKITLGGYVAFIQHYFVSAWVPMQDQSNTLYSLITKSNAAIIGVKDEAVNIQAGSEQTLTATYYMGPKESDVLEAIHPDLDLTVDYGWLWFISQPLFVLLKWLHSILGNWGVAIIAITIIVKSLMYPLTKAQYTSMAKMRALQPKMAALKEKFGDDRQKFGQATMEMYKKEKVNPMGGCFPILLQMPIFLALFYVFLESTELRHAEFIFWLTDLSAKDPYYVLPILFGASMFITQKLQPMTVTDPMQQKMMTFMPVIFSVFFLWFPSGLVLYWLVSNLISIVQMLIIYRGMEKKGIKVRG.

The disordered stretch occupies residues 29 to 58 (TPKADPSATTQTLNPTSSESEDYVPTSSDS). A compositionally biased stretch (polar residues) spans 35–46 (SATTQTLNPTSS). Transmembrane regions (helical) follow at residues 341–361 (FVLL…IIAI), 421–441 (GGCF…YVFL), and 499–519 (PVIF…YWLV).

The protein belongs to the OXA1/ALB3/YidC family. Type 1 subfamily. As to quaternary structure, interacts with the Sec translocase complex via SecD. Specifically interacts with transmembrane segments of nascent integral membrane proteins during membrane integration.

Its subcellular location is the cell inner membrane. Its function is as follows. Required for the insertion and/or proper folding and/or complex formation of integral membrane proteins into the membrane. Involved in integration of membrane proteins that insert both dependently and independently of the Sec translocase complex, as well as at least some lipoproteins. Aids folding of multispanning membrane proteins. The protein is Membrane protein insertase YidC of Pseudoalteromonas translucida (strain TAC 125).